Consider the following 727-residue polypeptide: Bromodomain-containing protein C631.02 (727 aa).

Disordered regions lie at residues 27–231 and 341–369; these read AATI…PPMT and TSYS…AAMY. Residues 56–68 show a composition bias toward acidic residues; sequence ENDDGTLDLFGDS. Over residues 69 to 78 the composition is skewed to basic and acidic residues; that stretch reads ELEKEQKGDN. Polar residues predominate over residues 102 to 114; that stretch reads PSSPTHPSVSNIT. Over residues 128–150 the composition is skewed to basic and acidic residues; sequence EEEKSSESLDSHTHPPKRVRNED. Polar residues predominate over residues 153–177; the sequence is LTFSKTSPVSPSSLKDGASNTVTND. The residue at position 162 (serine 162) is a Phosphoserine. A compositionally biased stretch (basic and acidic residues) spans 206 to 231; the sequence is SKEHSSPHDETVKKEENDKDQYPPMT. The Bromo 1 domain occupies 229-335; that stretch reads PMTKEQHKYI…ATFERQLKQL (107 aa). The Bromo 2 domain maps to 388–497; it reads RKDAAEMKFC…SIFQKLWANK (110 aa). Residues 570–650 form the NET domain; sequence RSLSVDIYPP…KGDEIGAEAL (81 aa). Residues 699–727 form a disordered region; sequence IAAYNTKSLGSDDSSSEDDGESSESSDSA. The span at 712-727 shows a compositional bias: acidic residues; it reads SSSEDDGESSESSDSA.

This sequence belongs to the BET family.

The protein resides in the nucleus. The polypeptide is Bromodomain-containing protein C631.02 (Schizosaccharomyces pombe (strain 972 / ATCC 24843) (Fission yeast)).